Consider the following 67-residue polypeptide: DNA-directed RNA polymerase subunit omega (67 aa).

The protein belongs to the RNA polymerase subunit omega family. In terms of assembly, the RNAP catalytic core consists of 2 alpha, 1 beta, 1 beta' and 1 omega subunit. When a sigma factor is associated with the core the holoenzyme is formed, which can initiate transcription.

The enzyme catalyses RNA(n) + a ribonucleoside 5'-triphosphate = RNA(n+1) + diphosphate. Functionally, promotes RNA polymerase assembly. Latches the N- and C-terminal regions of the beta' subunit thereby facilitating its interaction with the beta and alpha subunits. The sequence is that of DNA-directed RNA polymerase subunit omega from Leptothrix cholodnii (strain ATCC 51168 / LMG 8142 / SP-6) (Leptothrix discophora (strain SP-6)).